The primary structure comprises 113 residues: Early nodulin-12B (113 aa).

The first 24 residues, 1-24 (MASFSLSILVFFISALVLVPQGFA), serve as a signal peptide directing secretion. The segment at 29-113 (NPAYRPPQTK…HPPAEDNIHF (85 aa)) is disordered. Pro residues predominate over residues 32-42 (YRPPQTKPPVN). 2 consecutive repeat copies span residues 34–38 (PPQTK) and 39–43 (PPVNK). The tract at residues 34-109 (PPQTKPPVNK…PTHKHPPAED (76 aa)) is 15 X 5 AA approximate tandem repeats of P-P-[QVHRTA]-[NHKE]-[KEDT]. A 3; approximate repeat occupies 44–48 (PSHKE). 2 stretches are compositionally biased toward basic and acidic residues: residues 45–60 (SHKEPPVHKPPHKEPP) and 67–113 (KEPP…NIHF). A run of 3 repeats spans residues 49-53 (PPVHK), 54-58 (PPHKE), and 59-63 (PPVNK). A 7; approximate repeat occupies 64–68 (PRHKE). Repeat copies occupy residues 69–73 (PPVHK), 74–78 (PPHKD), 79–83 (PPVNK), and 84–88 (PPQKE). The stretch at 89-93 (SPVHK) is one 12; approximate repeat. 3 repeat units span residues 94 to 98 (PPRKE), 99 to 103 (PPTHK), and 105 to 109 (PPAED).

Belongs to the plant proline-rich protein superfamily. ENOD12 family. In terms of tissue distribution, expressed only in young nodules.

It localises to the secreted. The protein localises to the cell wall. Its function is as follows. Involved in the infection process during the plant-rhizobium interaction. The sequence is that of Early nodulin-12B (ENOD12B) from Medicago sativa (Alfalfa).